Consider the following 331-residue polypeptide: MKKPVVIGLAIAAIVAVIAGGTWWYQSRQDDGLTLYGNVDIRTVNISFRVGGRLASLNVDEGDAIKAGQVLGELDHAPYENALMQAKAGVSVAQAQYDLMLAGYRDEEIAQAAAAVRQAQAAYDYAQNFYNRQQGLWKSRTISANDLENARSSRDQAQATLKSAQDKLSQYRTGNREQDIAQAKASLEQAKAQLAQAQLDLQDTTLIAPANGTLLTRAVEPGSMLNAGSTVLTLSLTRPVWVRAYVDERNLSQTQPGRDILLYTDGRPDKPYHGKIGFVSPTAEFTPKTVETPDLRTDLVYRLRIIVTDADDALRQGMPVTVKFNDEVRHE.

The signal sequence occupies residues 1–19 (MKKPVVIGLAIAAIVAVIA). Residues 107–208 (EEIAQAAAAV…LDLQDTTLIA (102 aa)) adopt a coiled-coil conformation.

Belongs to the UPF0194 family.

It is found in the periplasm. The chain is UPF0194 membrane protein YbhG from Salmonella paratyphi A (strain ATCC 9150 / SARB42).